The primary structure comprises 89 residues: Small ribosomal subunit protein uS15 (89 aa).

The protein belongs to the universal ribosomal protein uS15 family. As to quaternary structure, part of the 30S ribosomal subunit. Forms a bridge to the 50S subunit in the 70S ribosome, contacting the 23S rRNA.

One of the primary rRNA binding proteins, it binds directly to 16S rRNA where it helps nucleate assembly of the platform of the 30S subunit by binding and bridging several RNA helices of the 16S rRNA. In terms of biological role, forms an intersubunit bridge (bridge B4) with the 23S rRNA of the 50S subunit in the ribosome. The polypeptide is Small ribosomal subunit protein uS15 (Prochlorococcus marinus subsp. pastoris (strain CCMP1986 / NIES-2087 / MED4)).